We begin with the raw amino-acid sequence, 807 residues long: ATP-binding cassette sub-family F member 1 (807 aa).

The disordered stretch occupies residues 1 to 227 (MPKGPKQQPP…KEKAKKAEQM (227 aa)). The residue at position 22 (serine 22) is a Phosphoserine. A compositionally biased stretch (basic residues) spans 29-39 (KKGKKDKKTKK). Basic and acidic residues predominate over residues 47–65 (VEDRQAGEEEKVLKEKEQQ). The segment covering 73–85 (QKKKRDTRKGRRK) has biased composition (basic residues). Residue serine 106 is modified to Phosphoserine. Residues serine 110 and serine 141 each carry the phosphoserine; by CK2 modification. A compositionally biased stretch (basic and acidic residues) spans 148-161 (EKHPPKPAKPEKNR). At serine 167 the chain carries Phosphoserine. The span at 197 to 207 (LDDEEEQDEEE) shows a compositional bias: acidic residues. Residues 208 to 227 (IKEKEPPKQGKEKAKKAEQM) show a composition bias toward basic and acidic residues. Residues 266-510 (IKLEKFSISA…MYQQKQKELL (245 aa)) form the ABC transporter 1 domain. Residue 298 to 305 (GPNGKGKT) participates in ATP binding. The segment covering 521–542 (KELKAGGKSTKQAEKQTKEALT) has biased composition (basic and acidic residues). A disordered region spans residues 521 to 564 (KELKAGGKSTKQAEKQTKEALTRKQQKCRRKNQDEESQEAPELL). At serine 557 the chain carries Phosphoserine. Positions 587 to 802 (LGLHGVTFGY…VLEALGEVMV (216 aa)) constitute an ABC transporter 2 domain. 620–627 (GPNGVGKS) serves as a coordination point for ATP.

It belongs to the ABC transporter superfamily. ABCF family. EF3 subfamily. Interacts (via N-terminus) with EIF2S1; the interaction is independent of its phosphorylated status. Associates (via both ABC transporter domains) with the ribosomes. In terms of processing, phosphorylated at phosphoserine and phosphothreonine. Phosphorylation on Ser-110 and Ser-141 by CK2; inhibits association of EIF2 with ribosomes.

The protein resides in the cytoplasm. The protein localises to the nucleus. It localises to the nucleoplasm. It is found in the nucleus envelope. In terms of biological role, required for efficient Cap- and IRES-mediated mRNA translation initiation. Not involved in the ribosome biogenesis. The polypeptide is ATP-binding cassette sub-family F member 1 (ABCF1) (Sus scrofa (Pig)).